The following is a 989-amino-acid chain: AP-2 complex subunit alpha-2 (989 aa).

4 HEAT repeats span residues 112–149, 188–225, 368–402, and 403–440; these read EMLP…KEVA, VTPD…ENPI, IMIK…MCDK, and NTCK…KFAS. The interval 610 to 745 is disordered; sequence DNSNTTSNTA…SSSPISSGGS (136 aa). The span at 611–623 shows a compositional bias: low complexity; sequence NSNTTSNTANNSN. A compositionally biased stretch (polar residues) spans 624-638; it reads MINSQDSKISSGGFN. Low complexity predominate over residues 639 to 703; the sequence is QSPQPSQQQQ…QPVYQQQQQA (65 aa). Polar residues predominate over residues 704 to 714; sequence ESFSPVQSDTV. Low complexity predominate over residues 715–745; it reads SSFGQQQQQQQGGFSSPTIQASSSPISSGGS.

The protein belongs to the adaptor complexes large subunit family. Adaptor protein complex 2 (AP-2) is a heterotetramer composed of two large adaptins (alpha-type and beta-type subunits), a medium adaptin (mu-type subunit AP50) and a small adaptin (sigma-type subunit AP17).

It localises to the cell membrane. The protein localises to the membrane. It is found in the coated pit. Its function is as follows. Component of the adaptor complexes which link clathrin to receptors in coated vesicles. Clathrin-associated protein complexes are believed to interact with the cytoplasmic tails of membrane proteins, leading to their selection and concentration. This chain is AP-2 complex subunit alpha-2 (ap2a1-1), found in Dictyostelium discoideum (Social amoeba).